The chain runs to 418 residues: Glutamyl-tRNA reductase (418 aa).

Residues 49-52 (TCNR), S108, 113-115 (EPQ), and Q119 each bind substrate. The active-site Nucleophile is C50. 188–193 (GAGETI) is an NADP(+) binding site.

Belongs to the glutamyl-tRNA reductase family. As to quaternary structure, homodimer.

The catalysed reaction is (S)-4-amino-5-oxopentanoate + tRNA(Glu) + NADP(+) = L-glutamyl-tRNA(Glu) + NADPH + H(+). It functions in the pathway porphyrin-containing compound metabolism; protoporphyrin-IX biosynthesis; 5-aminolevulinate from L-glutamyl-tRNA(Glu): step 1/2. Its function is as follows. Catalyzes the NADPH-dependent reduction of glutamyl-tRNA(Glu) to glutamate 1-semialdehyde (GSA). This Aliivibrio fischeri (strain MJ11) (Vibrio fischeri) protein is Glutamyl-tRNA reductase.